A 109-amino-acid chain; its full sequence is Trafficking protein particle complex subunit 2-like protein (109 aa).

The protein belongs to the TRAPP small subunits family. Sedlin subfamily. As to quaternary structure, component of the multisubunit TRAPP (transport protein particle) complex, which includes at least TRAPPC2, TRAPPC2L, TRAPPC3, TRAPPC3L, TRAPPC4, TRAPPC5, TRAPPC8, TRAPPC9, TRAPPC10, TRAPPC11 and TRAPPC12. Interacts with the heterodimer TRAPPC3-TRAPPC6A.

The protein resides in the cytoplasm. It localises to the perinuclear region. Its subcellular location is the endoplasmic reticulum. It is found in the golgi apparatus. In terms of biological role, may play a role in vesicular transport from endoplasmic reticulum to Golgi. The polypeptide is Trafficking protein particle complex subunit 2-like protein (TRAPPC2L) (Pongo abelii (Sumatran orangutan)).